The primary structure comprises 284 residues: uncharacterized protein (284 aa).

Helical transmembrane passes span 174–194 (LFVLIVMFTTVHRVQCIYISI), 217–237 (MLIPGPGVAHTYIYVAGPGTA), and 241–261 (LIVLLLLLLCIVVAVNTSGSC).

The protein resides in the membrane. This is an uncharacterized protein from Saccharomyces cerevisiae (strain ATCC 204508 / S288c) (Baker's yeast).